Here is a 779-residue protein sequence, read N- to C-terminus: Probable ATP-dependent RNA helicase DHX40 (779 aa).

The disordered stretch occupies residues 1 to 53 (MSRFPAVAGRAPRRQEEGERSRDLQEERPSAVCIADREEKGCTSQEGGTTPTF). A compositionally biased stretch (basic and acidic residues) spans 13-41 (RRQEEGERSRDLQEERPSAVCIADREEKG). Residues 42 to 53 (CTSQEGGTTPTF) are compositionally biased toward polar residues. The Helicase ATP-binding domain occupies 63–231 (IQAVRDNSFL…FGNCPIFDIP (169 aa)). Position 76–83 (76–83 (GNTGSGKT)) interacts with ATP. The DEAH box motif lies at 173–176 (DEAH). One can recognise a Helicase C-terminal domain in the interval 263-442 (TMDIHLNEMA…SVVLTLKCLA (180 aa)). A disordered region spans residues 737–779 (SKDVLKKMQRRNDDKSISDARARFLERKQQRTQDHSDTRKETG).

The protein belongs to the DEAD box helicase family. DEAH subfamily.

The catalysed reaction is ATP + H2O = ADP + phosphate + H(+). In terms of biological role, probable ATP-dependent RNA helicase. The polypeptide is Probable ATP-dependent RNA helicase DHX40 (DHX40) (Pongo abelii (Sumatran orangutan)).